The following is a 425-amino-acid chain: Gamma-glutamyl phosphate reductase (425 aa).

Belongs to the gamma-glutamyl phosphate reductase family.

Its subcellular location is the cytoplasm. The enzyme catalyses L-glutamate 5-semialdehyde + phosphate + NADP(+) = L-glutamyl 5-phosphate + NADPH + H(+). It functions in the pathway amino-acid biosynthesis; L-proline biosynthesis; L-glutamate 5-semialdehyde from L-glutamate: step 2/2. Its function is as follows. Catalyzes the NADPH-dependent reduction of L-glutamate 5-phosphate into L-glutamate 5-semialdehyde and phosphate. The product spontaneously undergoes cyclization to form 1-pyrroline-5-carboxylate. The protein is Gamma-glutamyl phosphate reductase of Novosphingobium aromaticivorans (strain ATCC 700278 / DSM 12444 / CCUG 56034 / CIP 105152 / NBRC 16084 / F199).